Consider the following 301-residue polypeptide: GTP cyclohydrolase FolE2 (301 aa).

This sequence belongs to the GTP cyclohydrolase IV family.

It carries out the reaction GTP + H2O = 7,8-dihydroneopterin 3'-triphosphate + formate + H(+). The protein operates within cofactor biosynthesis; 7,8-dihydroneopterin triphosphate biosynthesis; 7,8-dihydroneopterin triphosphate from GTP: step 1/1. Functionally, converts GTP to 7,8-dihydroneopterin triphosphate. The sequence is that of GTP cyclohydrolase FolE2 from Exiguobacterium sibiricum (strain DSM 17290 / CCUG 55495 / CIP 109462 / JCM 13490 / 255-15).